The sequence spans 478 residues: 3-ketoacyl-CoA synthase 3 (478 aa).

A signal peptide spans 1-25 (MDLLVMLLSLLVSYLIFKIWKRIDS). Residues 26–313 (KRDQNCYILD…FMLCLLLKKL (288 aa)) form the FAE domain. Residues cysteine 168, histidine 247, histidine 345, histidine 349, histidine 378, and asparagine 382 contribute to the active site.

This sequence belongs to the thiolase-like superfamily. Chalcone/stilbene synthases family. Expressed in siliques, leaves, stems and seedlings.

It is found in the endoplasmic reticulum. It catalyses the reaction a very-long-chain acyl-CoA + malonyl-CoA + H(+) = a very-long-chain 3-oxoacyl-CoA + CO2 + CoA. The protein operates within lipid metabolism; fatty acid biosynthesis. This is 3-ketoacyl-CoA synthase 3 from Arabidopsis thaliana (Mouse-ear cress).